A 424-amino-acid polypeptide reads, in one-letter code: Enolase (424 aa).

Gln-162 contributes to the (2R)-2-phosphoglycerate binding site. Glu-204 serves as the catalytic Proton donor. Residues Asp-241, Glu-284, and Asp-311 each coordinate Mg(2+). (2R)-2-phosphoglycerate contacts are provided by Lys-336, Arg-365, Ser-366, and Lys-387. The Proton acceptor role is filled by Lys-336.

Belongs to the enolase family. Mg(2+) serves as cofactor.

Its subcellular location is the cytoplasm. It is found in the secreted. The protein localises to the cell surface. It catalyses the reaction (2R)-2-phosphoglycerate = phosphoenolpyruvate + H2O. The protein operates within carbohydrate degradation; glycolysis; pyruvate from D-glyceraldehyde 3-phosphate: step 4/5. Its function is as follows. Catalyzes the reversible conversion of 2-phosphoglycerate (2-PG) into phosphoenolpyruvate (PEP). It is essential for the degradation of carbohydrates via glycolysis. The sequence is that of Enolase from Parvibaculum lavamentivorans (strain DS-1 / DSM 13023 / NCIMB 13966).